Here is a 370-residue protein sequence, read N- to C-terminus: Mesoderm posterior protein 2 (370 aa).

Disordered stretches follow at residues proline 51–lysine 89, serine 231–glutamine 265, and threonine 325–leucine 350. Residues proline 57–alanine 77 show a composition bias toward low complexity. A bHLH domain is found at glycine 79–leucine 133. The span at threonine 325 to alanine 334 shows a compositional bias: polar residues. The interval serine 326–glycine 330 is may contain a degradation domain.

In terms of processing, degraded by the proteasome. Phosphorylated.

It localises to the nucleus. Transcription factor with important role in somitogenesis. Defines the rostrocaudal patterning of the somite by participating in distinct Notch pathways. Also regulates the FGF signaling pathway. Specifies the rostral half of the somites. Generates rostro-caudal polarity of somites by down-regulating in the presumptive rostral domain DLL1, a Notch ligand. Participates in the segment border formation by activating in the anterior presomitic mesoderm LFNG, a negative regulator of DLL1-Notch signaling. Acts as a strong suppressor of Notch activity. Together with MESP1 is involved in the epithelialization of somitic mesoderm and in the development of cardiac mesoderm. May play a role with Tcf15 in the differentiation of myotomal and sclerotomal cells by regulating Pax family genes. Also controls the expression of the protocadherin PCDH8/PAPC, EPHA4, RIPPLY2, NOTCH2, FGFR1, and CER1. Binds to the E-boxes within the EPH4A and RIPPLY2 enhancers. The protein is Mesoderm posterior protein 2 (Mesp2) of Mus musculus (Mouse).